The primary structure comprises 406 residues: Ribonuclease D (406 aa).

In terms of domain architecture, 3'-5' exonuclease spans 26–193 (LITQTTDLEI…VYLLLKKQLE (168 aa)). The 82-residue stretch at 231-312 (KPRELAVLQK…HEGLEVDLAT (82 aa)) folds into the HRDC domain.

It belongs to the RNase D family. A divalent metal cation serves as cofactor.

It is found in the cytoplasm. The enzyme catalyses Exonucleolytic cleavage that removes extra residues from the 3'-terminus of tRNA to produce 5'-mononucleotides.. Exonuclease involved in the 3' processing of various precursor tRNAs. Initiates hydrolysis at the 3'-terminus of an RNA molecule and releases 5'-mononucleotides. This chain is Ribonuclease D, found in Bartonella henselae (strain ATCC 49882 / DSM 28221 / CCUG 30454 / Houston 1) (Rochalimaea henselae).